The chain runs to 359 residues: Protein RecA (359 aa).

An ATP-binding site is contributed by glycine 73 to threonine 80.

It belongs to the RecA family.

Its subcellular location is the cytoplasm. Functionally, can catalyze the hydrolysis of ATP in the presence of single-stranded DNA, the ATP-dependent uptake of single-stranded DNA by duplex DNA, and the ATP-dependent hybridization of homologous single-stranded DNAs. It interacts with LexA causing its activation and leading to its autocatalytic cleavage. The chain is Protein RecA from Desulfovibrio desulfuricans (strain ATCC 27774 / DSM 6949 / MB).